A 94-amino-acid chain; its full sequence is Adaptation to cold protein J (94 aa).

In terms of domain architecture, J spans 3 to 93 (NHFSVLGIKP…AMRELWDQFY (91 aa)). Residues 74–94 (NNVIVTDPNSAMRELWDQFYP) form an essential for interaction with AtcC region.

In terms of assembly, interacts via its C-terminal extension with AtcC. Does not interact with AtcA and AtcB.

Its function is as follows. Involved in cold adaptation. The J-domain is functional and can stimulate the ATPase activity of the DnaK chaperone. May work as a co-chaperone of the DnaK system to support cold resistance. In Shewanella oneidensis (strain ATCC 700550 / JCM 31522 / CIP 106686 / LMG 19005 / NCIMB 14063 / MR-1), this protein is Adaptation to cold protein J.